We begin with the raw amino-acid sequence, 440 residues long: 3-phosphoshikimate 1-carboxyvinyltransferase (440 aa).

The 3-phosphoshikimate site is built by Lys25, Ser26, and Arg30. Position 25 (Lys25) interacts with phosphoenolpyruvate. Phosphoenolpyruvate contacts are provided by Gly96 and Arg124. Residues Ser168, Gln169, Asp310, and Lys337 each coordinate 3-phosphoshikimate. Gln169 is a binding site for phosphoenolpyruvate. The active-site Proton acceptor is the Asp310. Phosphoenolpyruvate-binding residues include Arg341, Arg382, and Lys409.

Belongs to the EPSP synthase family. Monomer.

Its subcellular location is the cytoplasm. It carries out the reaction 3-phosphoshikimate + phosphoenolpyruvate = 5-O-(1-carboxyvinyl)-3-phosphoshikimate + phosphate. Its pathway is metabolic intermediate biosynthesis; chorismate biosynthesis; chorismate from D-erythrose 4-phosphate and phosphoenolpyruvate: step 6/7. Functionally, catalyzes the transfer of the enolpyruvyl moiety of phosphoenolpyruvate (PEP) to the 5-hydroxyl of shikimate-3-phosphate (S3P) to produce enolpyruvyl shikimate-3-phosphate and inorganic phosphate. In Chlamydia trachomatis serovar D (strain ATCC VR-885 / DSM 19411 / UW-3/Cx), this protein is 3-phosphoshikimate 1-carboxyvinyltransferase.